We begin with the raw amino-acid sequence, 130 residues long: Ribosome-binding factor A (130 aa).

The protein belongs to the RbfA family. In terms of assembly, monomer. Binds 30S ribosomal subunits, but not 50S ribosomal subunits or 70S ribosomes.

It localises to the cytoplasm. In terms of biological role, one of several proteins that assist in the late maturation steps of the functional core of the 30S ribosomal subunit. Associates with free 30S ribosomal subunits (but not with 30S subunits that are part of 70S ribosomes or polysomes). Required for efficient processing of 16S rRNA. May interact with the 5'-terminal helix region of 16S rRNA. This chain is Ribosome-binding factor A, found in Prochlorococcus marinus (strain SARG / CCMP1375 / SS120).